A 487-amino-acid chain; its full sequence is Putative B3 domain-containing protein At1g78640 (487 aa).

2 DNA-binding regions (TF-B3) span residues 171-269 (RLLL…QQGT) and 379-474 (RLTL…LFRV).

It localises to the nucleus. In Arabidopsis thaliana (Mouse-ear cress), this protein is Putative B3 domain-containing protein At1g78640.